We begin with the raw amino-acid sequence, 310 residues long: MSYYFITMKGYSINVEEGYKRIFGINIYYKLYRVKGSNRNLVTLHGGPGGSHDYLIPLADLSNYGINVLFYDQFGCGRSDDPKDTSDYTIDHGLEELEELRKQVFGNDKIVLLGHSYGGALAIAYALKYQQFLRGLIVSSGLSSVPYTVKEMRRLIEELPDKYKTIIKRYESLGDFKNPEYLDAVNFFYSQHLLRLKEMPEPVKRTFEYIGKRRTYEIMNGPNEFTIIGTIKDWDVTEQLYKITVPTLITVGKYDEVTVNVAQLIHKNIKGSRLVIFENSSHMAMWEEKDKYLEVIKEFIDQVYSLNMVK.

The 248-residue stretch at 41–288 folds into the AB hydrolase-1 domain; it reads LVTLHGGPGG…NSSHMAMWEE (248 aa). Serine 116 functions as the Nucleophile in the catalytic mechanism. The active site involves aspartate 255. The active-site Proton donor is histidine 282.

This sequence belongs to the peptidase S33 family. Part of the tricorn proteolytic complex.

It carries out the reaction Release of N-terminal proline from a peptide.. Cleaves H-Pro-AMC as well as a wide spectrum of amino acid substrates and several peptide substrates without a proline at the N-terminus. In conjunction with the three factors F1, F2 and F3, Tricorn degrades oligopeptides in a sequential manner, yielding free amino acids. The polypeptide is Proline iminopeptidase (pip) (Saccharolobus solfataricus (strain ATCC 35092 / DSM 1617 / JCM 11322 / P2) (Sulfolobus solfataricus)).